The primary structure comprises 299 residues: UDP-N-acetylenolpyruvoylglucosamine reductase (299 aa).

An FAD-binding PCMH-type domain is found at 29–193 (RIGGPAEIFL…TAASLRFRKA (165 aa)). Arginine 173 is an active-site residue. Catalysis depends on serine 222, which acts as the Proton donor. Glutamate 292 is an active-site residue.

Belongs to the MurB family. FAD is required as a cofactor.

It is found in the cytoplasm. The enzyme catalyses UDP-N-acetyl-alpha-D-muramate + NADP(+) = UDP-N-acetyl-3-O-(1-carboxyvinyl)-alpha-D-glucosamine + NADPH + H(+). The protein operates within cell wall biogenesis; peptidoglycan biosynthesis. In terms of biological role, cell wall formation. The sequence is that of UDP-N-acetylenolpyruvoylglucosamine reductase from Syntrophotalea carbinolica (strain DSM 2380 / NBRC 103641 / GraBd1) (Pelobacter carbinolicus).